The following is a 690-amino-acid chain: Protein MODIFIED TRANSPORT TO THE VACUOLE 1 (690 aa).

Residues 20–150 form the VHS domain; sequence VTSDEDKVAP…PESINRRIEG (131 aa). 2 disordered regions span residues 228–258 and 518–551; these read DGNY…SVRV and FSID…HQAP. The segment covering 243–257 has biased composition (low complexity); that stretch reads GHASGEASESSASVR. The span at 520 to 536 shows a compositional bias: polar residues; the sequence is IDENNSNQKGSSSSTLP.

As to quaternary structure, binds to clathrin heavy chain. As to expression, expressed in inflorescence stems, stigmas, roots, roots meristems, embryos, and floral and leaf vasculatures, but absent from the floral abscission zone.

It localises to the golgi apparatus. The protein resides in the trans-Golgi network. Its subcellular location is the cytoplasmic vesicle. The protein localises to the clathrin-coated vesicle. Functionally, mediates clathrin-dependent trafficking of vacuolar cargo from the trans-Golgi network (TGN). Promotes plant growth. The protein is Protein MODIFIED TRANSPORT TO THE VACUOLE 1 of Arabidopsis thaliana (Mouse-ear cress).